Reading from the N-terminus, the 340-residue chain is Guanine nucleotide-binding protein G(I)/G(S)/G(T) subunit beta-1 (340 aa).

7 WD repeats span residues 53 to 83 (GHLA…IIWD), 95 to 125 (LRSS…SIYN), 141 to 170 (GHTG…ALWD), 182 to 212 (GHTG…KLWD), 224 to 254 (GHES…RLFD), 268 to 298 (NIIC…NVWD), and 310 to 340 (GHDN…KIWN).

This sequence belongs to the WD repeat G protein beta family. G proteins are composed of 3 units, alpha, beta and gamma.

In terms of biological role, guanine nucleotide-binding proteins (G proteins) are involved as a modulator or transducer in various transmembrane signaling systems. The beta and gamma chains are required for the GTPase activity, for replacement of GDP by GTP, and for G protein-effector interaction. The protein is Guanine nucleotide-binding protein G(I)/G(S)/G(T) subunit beta-1 (gnb1) of Danio rerio (Zebrafish).